Here is a 246-residue protein sequence, read N- to C-terminus: Flavin-dependent thymidylate synthase (246 aa).

The ThyX domain maps to Ile17–Asn241. FAD-binding positions include Ser69, Arg92–Arg94, and Glu101. Residues Glu89–Arg92, Glu101–Arg105, and Arg173 contribute to the dUMP site. Residues Arg92–Ser103 carry the ThyX motif motif. Residues Asn189–Arg191 and His195 contribute to the FAD site. DUMP is bound at residue Arg200. Residue Arg200 is the Involved in ionization of N3 of dUMP, leading to its activation of the active site.

It belongs to the thymidylate synthase ThyX family. In terms of assembly, homotetramer. Requires FAD as cofactor.

The enzyme catalyses dUMP + (6R)-5,10-methylene-5,6,7,8-tetrahydrofolate + NADPH + H(+) = dTMP + (6S)-5,6,7,8-tetrahydrofolate + NADP(+). It functions in the pathway pyrimidine metabolism; dTTP biosynthesis. Its function is as follows. Catalyzes the reductive methylation of 2'-deoxyuridine-5'-monophosphate (dUMP) to 2'-deoxythymidine-5'-monophosphate (dTMP) while utilizing 5,10-methylenetetrahydrofolate (mTHF) as the methyl donor, and NADPH and FADH(2) as the reductant. This Streptomyces coelicolor (strain ATCC BAA-471 / A3(2) / M145) protein is Flavin-dependent thymidylate synthase.